The primary structure comprises 270 residues: Undecaprenyl-diphosphatase 3 (270 aa).

The next 7 membrane-spanning stretches (helical) occupy residues 5 to 25, 42 to 62, 89 to 109, 117 to 137, 192 to 212, 220 to 240, and 250 to 270; these read YYIL…PIPI, IEGF…VLLI, FFFI…GVLF, LKGV…LWII, FSFL…ITDI, TLFV…YISL, and GNLK…LIFL.

The protein belongs to the UppP family.

It localises to the cell membrane. The catalysed reaction is di-trans,octa-cis-undecaprenyl diphosphate + H2O = di-trans,octa-cis-undecaprenyl phosphate + phosphate + H(+). Functionally, catalyzes the dephosphorylation of undecaprenyl diphosphate (UPP). Confers resistance to bacitracin. The polypeptide is Undecaprenyl-diphosphatase 3 (Bacillus anthracis).